The primary structure comprises 73 residues: U3-agatoxin-Ao1e (73 aa).

A signal peptide spans 1 to 20; the sequence is MRTIISLLLLSAMVFAVIEA. Positions 21-34 are excised as a propeptide; it reads ISLEEGLQLFEGER. 4 disulfides stabilise this stretch: C36–C52, C43–C57, C51–C67, and C59–C65. Residue N71 is modified to Asparagine amide.

Belongs to the neurotoxin 07 (Beta/delta-agtx) family. 03 (aga-4) subfamily. Aga sub-subfamily. Expressed by the venom gland.

Its subcellular location is the secreted. Functionally, insecticidal neurotoxin that induces an irreversible spastic paralysis when injected into insects. Modifies presynaptic voltage-gated sodium channels (Nav), causing them to open at the normal resting potential of the nerve. This leads to spontaneous release of neurotransmitter and repetitive action potentials in motor neurons. This Agelena orientalis (Funnel-web spider) protein is U3-agatoxin-Ao1e.